A 396-amino-acid chain; its full sequence is Protein-export membrane protein SecD (396 aa).

A run of 6 helical transmembrane segments spans residues 12-32, 243-263, 272-292, 298-318, 338-358, and 360-380; these read ILIL…KGLD, LKGT…IVSI, IPIL…ASLI, LPSI…QIVI, FFII…LFVL, and VGML…GIFI.

This sequence belongs to the SecD/SecF family. SecD subfamily. In terms of assembly, part of the protein translocation apparatus. Forms a complex with SecF.

It is found in the cell membrane. In terms of biological role, involved in protein export. In Methanocaldococcus jannaschii (strain ATCC 43067 / DSM 2661 / JAL-1 / JCM 10045 / NBRC 100440) (Methanococcus jannaschii), this protein is Protein-export membrane protein SecD.